The following is a 50-amino-acid chain: U2-ctenitoxin-Pk1a (50 aa).

5 disulfide bridges follow: Cys-1–Cys-15, Cys-8–Cys-21, Cys-12–Cys-47, Cys-14–Cys-31, and Cys-23–Cys-29.

In terms of tissue distribution, expressed by the venom gland.

The protein localises to the secreted. Functionally, insecticidal neurotoxin that reversibly inhibits the N-methyl-D-aspartate (NMDA)-subtype of ionotropic glutamate receptor (GRIN) and inhibits inactivation of insect sodium channels (Nav). In vivo, is highly toxic to insects. This chain is U2-ctenitoxin-Pk1a, found in Phoneutria keyserlingi (Brazilian wandering spider).